Consider the following 554-residue polypeptide: CTP synthase (554 aa).

The interval 1–265 (MTPLIFVTGG…DELVIDQFKL (265 aa)) is amidoligase domain. Residue serine 13 participates in CTP binding. Residue serine 13 participates in UTP binding. ATP-binding positions include 14-19 (SLGKGI) and aspartate 71. Mg(2+)-binding residues include aspartate 71 and glutamate 139. CTP-binding positions include 146-148 (DIE), 186-191 (KTKPTQ), and lysine 222. Residues 186-191 (KTKPTQ) and lysine 222 each bind UTP. The Glutamine amidotransferase type-1 domain occupies 292-545 (NIAVVGKYVD…VRAAREKKAG (254 aa)). L-glutamine is bound at residue glycine 353. Cysteine 380 acts as the Nucleophile; for glutamine hydrolysis in catalysis. L-glutamine is bound by residues 381-384 (YGMQ), glutamate 404, and arginine 471. Active-site residues include histidine 518 and glutamate 520.

Belongs to the CTP synthase family. As to quaternary structure, homotetramer.

The catalysed reaction is UTP + L-glutamine + ATP + H2O = CTP + L-glutamate + ADP + phosphate + 2 H(+). It catalyses the reaction L-glutamine + H2O = L-glutamate + NH4(+). It carries out the reaction UTP + NH4(+) + ATP = CTP + ADP + phosphate + 2 H(+). Its pathway is pyrimidine metabolism; CTP biosynthesis via de novo pathway; CTP from UDP: step 2/2. Its activity is regulated as follows. Allosterically activated by GTP, when glutamine is the substrate; GTP has no effect on the reaction when ammonia is the substrate. The allosteric effector GTP functions by stabilizing the protein conformation that binds the tetrahedral intermediate(s) formed during glutamine hydrolysis. Inhibited by the product CTP, via allosteric rather than competitive inhibition. Functionally, catalyzes the ATP-dependent amination of UTP to CTP with either L-glutamine or ammonia as the source of nitrogen. Regulates intracellular CTP levels through interactions with the four ribonucleotide triphosphates. In Xanthomonas axonopodis pv. citri (strain 306), this protein is CTP synthase.